The primary structure comprises 384 residues: Probable L-aspartate decarboxylase (384 aa).

Lys233 carries the post-translational modification N6-(pyridoxal phosphate)lysine.

Belongs to the group II decarboxylase family. MfnA subfamily. It depends on pyridoxal 5'-phosphate as a cofactor.

The catalysed reaction is L-aspartate + H(+) = beta-alanine + CO2. Its pathway is cofactor biosynthesis; coenzyme A biosynthesis. In terms of biological role, catalyzes the decarboxylation of L-aspartate to produce beta-alanine. This Pyrococcus abyssi (strain GE5 / Orsay) protein is Probable L-aspartate decarboxylase.